The following is a 144-amino-acid chain: Transcriptional regulator MraZ (144 aa).

SpoVT-AbrB domains follow at residues 4–47 (EYKN…TADK) and 77–120 (AQEI…DLKQ).

This sequence belongs to the MraZ family. In terms of assembly, forms oligomers.

It localises to the cytoplasm. It is found in the nucleoid. The protein is Transcriptional regulator MraZ of Treponema denticola (strain ATCC 35405 / DSM 14222 / CIP 103919 / JCM 8153 / KCTC 15104).